Consider the following 291-residue polypeptide: 4-hydroxy-tetrahydrodipicolinate synthase (291 aa).

Residue Thr-44 participates in pyruvate binding. Tyr-132 acts as the Proton donor/acceptor in catalysis. The active-site Schiff-base intermediate with substrate is Lys-160. Ile-202 lines the pyruvate pocket.

The protein belongs to the DapA family. As to quaternary structure, homotetramer; dimer of dimers.

The protein localises to the cytoplasm. It carries out the reaction L-aspartate 4-semialdehyde + pyruvate = (2S,4S)-4-hydroxy-2,3,4,5-tetrahydrodipicolinate + H2O + H(+). It participates in amino-acid biosynthesis; L-lysine biosynthesis via DAP pathway; (S)-tetrahydrodipicolinate from L-aspartate: step 3/4. In terms of biological role, catalyzes the condensation of (S)-aspartate-beta-semialdehyde [(S)-ASA] and pyruvate to 4-hydroxy-tetrahydrodipicolinate (HTPA). This Thermodesulfovibrio yellowstonii (strain ATCC 51303 / DSM 11347 / YP87) protein is 4-hydroxy-tetrahydrodipicolinate synthase.